A 309-amino-acid polypeptide reads, in one-letter code: MSTLLDVRVAAIRELTPVIREYSFEALASTLPGFSAGSHVQLHLPNGRRNAYSLLSDPADTRQYRIAVRQQDASRGGSRYLHQHLKVGDRLRLSPPANLFPLHGEAQKHILVAAGIGITPFLAYSQELLRRGADFELHYAYRAGSSDAYVDELRQQLGPRLHEYLSGQRRLDLASLLQGRTLGTHVYACGPQSLLLDLQEQASAQGWSPRRVHWEAFAAAEPGQPFRVELARSGQQLEVAADESLLEALEAAGVEVPNLCRGGVCGQCQTPWLKGDVEHRDHFLSANERTSSLMPCVSRGCGSPILLDL.

In terms of domain architecture, FAD-binding FR-type spans 2-103 (STLLDVRVAA…SPPANLFPLH (102 aa)). The region spanning 226-309 (FRVELARSGQ…GCGSPILLDL (84 aa)) is the 2Fe-2S ferredoxin-type domain. [2Fe-2S] cluster-binding residues include Cys-260, Cys-265, Cys-268, and Cys-296.

It belongs to the PDR/VanB family. In terms of assembly, the heme-dependent oxidative N-demethylase (HODM) is a heterotetramer composed of a catalytic alpha subunit, a FMN/2Fe-2S-dependent oxidoreductase beta subunit, a gamma subunit with putative aminotransferase activity, and a delta subunit of unknown function. The cofactor is [2Fe-2S] cluster. FMN is required as a cofactor.

Its function is as follows. Component of the heme-dependent oxidative N-demethylase (HODM) enzyme, that catalyzes the NADPH-dependent oxidation of dimethylamine (DMA) to methylamine (MA) and formaldehyde. Functions in bacterial methylated amine catabolism, linking alkylamine oxidation to the tetrahydrofolate C1 pool. The beta subunit of HODM binds FMN and a 2Fe-2S cluster, and likely reduces the ferric heme iron of the alpha subunit to ferrous using NADPH. This is Heme-dependent oxidative N-demethylase beta subunit from Ectopseudomonas mendocina (strain ymp) (Pseudomonas mendocina).